The sequence spans 130 residues: Protein ApaG (130 aa).

An ApaG domain is found at 3 to 127 (KAETRGISVI…FSLDVPHMRR (125 aa)).

In Methylobacterium nodulans (strain LMG 21967 / CNCM I-2342 / ORS 2060), this protein is Protein ApaG.